Here is a 352-residue protein sequence, read N- to C-terminus: Cysteinyl leukotriene receptor 1 (352 aa).

The Extracellular segment spans residues 1 to 43 (MYLQGTKQTFLENMNGTENLTTSLINNTCHDTIDEFRNQVYST). N-linked (GlcNAc...) asparagine glycans are attached at residues asparagine 15, asparagine 19, and asparagine 26. The helical transmembrane segment at 44 to 64 (MYSVISVVGFFGNSFVLYVLI) threads the bilayer. Topologically, residues 65-72 (KTYHEKSA) are cytoplasmic. Residues 73 to 93 (FQVYMINLAIADLLCVCTLPL) traverse the membrane as a helical segment. The Extracellular segment spans residues 94–121 (RVVYYVHKGKWLFGDFLCRLTTYALYVN). Cysteine 111 and cysteine 188 are disulfide-bonded. A helical membrane pass occupies residues 122 to 142 (LYCSIFFMTAMSFFRCVAIVF). At 143–156 (PVQNINLVTQKKAR) the chain is on the cytoplasmic side. Residues 157 to 177 (FVCIGIWIFVILTSSPFLMYK) form a helical membrane-spanning segment. Residues 178–208 (SYQDEKNNTKCFEPPQNNQAKKYVLILHYVS) are Extracellular-facing. A glycan (N-linked (GlcNAc...) asparagine) is linked at asparagine 184. A helical transmembrane segment spans residues 209–229 (LFFGFIIPFVTIIVCYTMIIL). The Cytoplasmic segment spans residues 230–245 (TLLKNTMKKNMPSRRK). Residues 246-266 (AIGMIIVVTAAFLVSFMPYHI) traverse the membrane as a helical segment. Over 267–291 (QRTIHLHLLHSETRPCDSVLRMQKS) the chain is Extracellular. A helical transmembrane segment spans residues 292 to 312 (VVITLSLAASNCCFDPLLYFF). The Cytoplasmic segment spans residues 313–352 (SGGNFRRRLSTFRKHSLSSMTYVPKKKASLPEKGEEICNE).

The protein belongs to the G-protein coupled receptor 1 family. In terms of tissue distribution, widely expressed, with higher expression in the lung and skin, intermediate levels in the heart, kidney and stomach and lower levels in several other tissues. Isoform 1 is the most abundant form in all tested tissues.

The protein resides in the cell membrane. Functionally, receptor for cysteinyl leukotrienes mediating constriction of the microvascular smooth muscle during an inflammatory response. This response is mediated via a G-protein that activates a phosphatidylinositol-calcium second messenger system. The rank order of affinities for the leukotrienes is LTD4 &gt;&gt; LTE4 = LTC4 &gt;&gt; LTB4. In Mus musculus (Mouse), this protein is Cysteinyl leukotriene receptor 1 (Cysltr1).